Consider the following 103-residue polypeptide: MSSLSLAHYLVLGAVLFAISIVGIFLNRKNVIVLLMAIELMLLAVNLNFVAFSHYLGDLAGQVFVFFILTVAAAESAIGLAILVVLFRNLDTINVDDLDSLKG.

Transmembrane regions (helical) follow at residues 6–26 (LAHYLVLGAVLFAISIVGIFL), 32–52 (IVLLMAIELMLLAVNLNFVAF), and 63–83 (VFVFFILTVAAAESAIGLAIL).

This sequence belongs to the complex I subunit 4L family. In terms of assembly, NDH-1 is composed of 14 different subunits. Subunits NuoA, H, J, K, L, M, N constitute the membrane sector of the complex.

It is found in the cell inner membrane. The enzyme catalyses a quinone + NADH + 5 H(+)(in) = a quinol + NAD(+) + 4 H(+)(out). In terms of biological role, NDH-1 shuttles electrons from NADH, via FMN and iron-sulfur (Fe-S) centers, to quinones in the respiratory chain. The immediate electron acceptor for the enzyme in this species is believed to be ubiquinone. Couples the redox reaction to proton translocation (for every two electrons transferred, four hydrogen ions are translocated across the cytoplasmic membrane), and thus conserves the redox energy in a proton gradient. This chain is NADH-quinone oxidoreductase subunit K, found in Ralstonia pickettii (strain 12D).